The following is a 350-amino-acid chain: Protein-glutamate methylesterase/protein-glutamine glutaminase 2 (350 aa).

A Response regulatory domain is found at Arg3–Glu121. Asp54 bears the 4-aspartylphosphate mark. Positions Ile158–Ala322 constitute a CheB-type methylesterase domain. Catalysis depends on residues Ser170, His197, and Asp290.

The protein belongs to the CheB family. In terms of processing, phosphorylated by CheA. Phosphorylation of the N-terminal regulatory domain activates the methylesterase activity.

The protein resides in the cytoplasm. The catalysed reaction is [protein]-L-glutamate 5-O-methyl ester + H2O = L-glutamyl-[protein] + methanol + H(+). It catalyses the reaction L-glutaminyl-[protein] + H2O = L-glutamyl-[protein] + NH4(+). Its function is as follows. Involved in chemotaxis. Part of a chemotaxis signal transduction system that modulates chemotaxis in response to various stimuli. Catalyzes the demethylation of specific methylglutamate residues introduced into the chemoreceptors (methyl-accepting chemotaxis proteins or MCP) by CheR. Also mediates the irreversible deamidation of specific glutamine residues to glutamic acid. This chain is Protein-glutamate methylesterase/protein-glutamine glutaminase 2, found in Methanospirillum hungatei JF-1 (strain ATCC 27890 / DSM 864 / NBRC 100397 / JF-1).